The primary structure comprises 111 residues: Estrogen receptor (111 aa).

Residues 1–42 (PSGYAVREAGPPAYYRPNSDNRRQGGRERLASTSDKGSMAVE) are disordered. The modulating stretch occupies residues 1 to 49 (PSGYAVREAGPPAYYRPNSDNRRQGGRERLASTSDKGSMAVESAKETRY). The span at 19–30 (SDNRRQGGRERL) shows a compositional bias: basic and acidic residues. A Phosphoserine modification is found at Ser-32. NR C4-type zinc fingers lie at residues 50-70 (CAVCNDYASGYHYGVWSCEGC) and 86-110 (CPATNQCTIDKNRRKSCQACRLRKC). The nuclear receptor DNA-binding region spans 50–111 (CAVCNDYASG…CQACRLRKCY (62 aa)).

It belongs to the nuclear hormone receptor family. NR3 subfamily. As to quaternary structure, binds DNA as a homodimer. Can form a heterodimer with ESR2. Interacts with coactivator NCOA5. Interacts with PELP1, the interaction is enhanced by 17-beta-estradiol; the interaction increases ESR1 transcriptional activity. Interacts with NCOA7; the interaction is ligand-inducible. Interacts with AKAP13, CUEDC2, HEXIM1, KDM5A, MAP1S, SMARD1, and UBE1C. Interacts with MUC1; the interaction is stimulated by 7 beta-estradiol (E2) and enhances ESR1-mediated transcription. Interacts with DNTTIP2, and UIMC1. Interacts with KMT2D/MLL2. Interacts with ATAD2; the interaction is enhanced by estradiol. Interacts with KIF18A and LDB1. Interacts with RLIM (via its C-terminus). Interacts with MACROD1. Interacts with SH2D4A and PLCG. Interacts with SH2D4A; the interaction blocks binding to PLCG and inhibits estrogen-induced cell proliferation. Interacts with DYNLL1. Interacts with CCDC62; the interaction requires estradiol and appears to enhance the transcription of target genes. Interacts with NR2C1; the interaction prevents homodimerization of ESR1 and suppresses its transcriptional activity and cell growth. Interacts with DNAAF4. Interacts with PRMT2. Interacts with RBFOX2. Interacts with EP300; the interaction is estrogen-dependent and enhanced by CITED1. Interacts with CITED1; the interaction is estrogen-dependent. Interacts with FAM120B, FOXL2, PHB2 and SLC30A9. Interacts with coactivators NCOA3 and NCOA6. Interacts with STK3/MST2 only in the presence of SAV1 and vice-versa. Binds to CSNK1D. Interacts with NCOA2; NCOA2 can interact with ESR1 AF-1 and AF-2 domains simultaneously and mediate their transcriptional synergy. Interacts with DDX5. Interacts with NCOA1; the interaction seems to require a self-association of N-terminal and C-terminal regions. Interacts with ZNF366, DDX17, NFKB1, RELA, SP1 and SP3. Interacts with NRIP1. Interacts with GPER1; the interaction occurs in an estrogen-dependent manner. Interacts with CLOCK and the interaction is stimulated by estrogen. Interacts with TRIP4 (ufmylated); estrogen dependent. Interacts with LMTK3; the interaction phosphorylates ESR1 (in vitro) and protects it against proteasomal degradation. Interacts with CCAR2 (via N-terminus) in a ligand-independent manner. Interacts with ZFHX3. Interacts with SFR1 in a ligand-dependent and -independent manner. Interacts with DCAF13, LATS1 and DCAF1; regulates ESR1 ubiquitination and ubiquitin-mediated proteasomal degradation. Interacts (via DNA-binding domain) with POU4F2 (C-terminus); this interaction increases the estrogen receptor ESR1 transcriptional activity in a DNA- and ligand 17-beta-estradiol-independent manner. Interacts with ESRRB isoform 1. Interacts with UBE3A and WBP2. Interacts with GTF2B. Interacts with RBM39. In the absence of hormonal ligand, interacts with TACC1. Interacts with PI3KR1 or PI3KR2 and PTK2/FAK1. Interacts with SRC. Interacts with BAG1; the interaction is promoted in the absence of estradiol (17-beta-estradiol/E2). Interacts with and ubiquitinated by STUB1; the interaction is promoted in the absence of estradiol (17-beta-estradiol/E2). Interacts with NEDD8. Post-translationally, ubiquitinated; regulated by LATS1 via DCAF1 it leads to ESR1 proteasomal degradation. Deubiquitinated by OTUB1. Ubiquitinated by STUB1/CHIP; in the CA1 hippocampal region following loss of endogenous circulating estradiol (17-beta-estradiol/E2). Ubiquitinated by UBR5, leading to its degradation: UBR5 specifically recognizes and binds ligand-bound ESR1 when it is not associated with coactivators (NCOAs). In presence of NCOAs, the UBR5-degron is not accessible, preventing its ubiquitination and degradation. Dimethylated by PRMT1. Demethylated by JMJD6. In terms of processing, palmitoylated by ZDHHC7 and ZDHHC21. This modification is required for plasma membrane targeting and for rapid intracellular signaling via ERK and AKT kinases and cAMP generation, but not for signaling mediated by the nuclear hormone receptor. Post-translationally, phosphorylated by cyclin A/CDK2 and CK1. Phosphorylation probably enhances transcriptional activity. Dephosphorylation by PPP5C inhibits its transactivation activity. Phosphorylated by LMTK3 (in vitro).

It localises to the nucleus. The protein resides in the cytoplasm. Its subcellular location is the golgi apparatus. The protein localises to the cell membrane. In terms of biological role, nuclear hormone receptor. The steroid hormones and their receptors are involved in the regulation of eukaryotic gene expression and affect cellular proliferation and differentiation in target tissues. Ligand-dependent nuclear transactivation involves either direct homodimer binding to a palindromic estrogen response element (ERE) sequence or association with other DNA-binding transcription factors, such as AP-1/c-Jun, c-Fos, ATF-2, Sp1 and Sp3, to mediate ERE-independent signaling. Ligand binding induces a conformational change allowing subsequent or combinatorial association with multiprotein coactivator complexes through LXXLL motifs of their respective components. Mutual transrepression occurs between the estrogen receptor (ER) and NF-kappa-B in a cell-type specific manner. Decreases NF-kappa-B DNA-binding activity and inhibits NF-kappa-B-mediated transcription from the IL6 promoter and displace RELA/p65 and associated coregulators from the promoter. Recruited to the NF-kappa-B response element of the CCL2 and IL8 promoters and can displace CREBBP. Present with NF-kappa-B components RELA/p65 and NFKB1/p50 on ERE sequences. Can also act synergistically with NF-kappa-B to activate transcription involving respective recruitment adjacent response elements; the function involves CREBBP. Can activate the transcriptional activity of TFF1. Also mediates membrane-initiated estrogen signaling involving various kinase cascades. Essential for MTA1-mediated transcriptional regulation of BRCA1 and BCAS3. Maintains neuronal survival in response to ischemic reperfusion injury when in the presence of circulating estradiol (17-beta-estradiol/E2). This chain is Estrogen receptor (ESR1), found in Ovis aries (Sheep).